Here is a 346-residue protein sequence, read N- to C-terminus: Mitogen-activated protein kinase kinase 1c (346 aa).

The Protein kinase domain maps to 70-332 (LELVRFLGKG…TTDLLKHPFL (263 aa)). ATP is bound by residues 76-84 (LGKGAGGTV) and K99. D194 (proton acceptor) is an active-site residue.

Belongs to the protein kinase superfamily. STE Ser/Thr protein kinase family. MAP kinase kinase subfamily.

The enzyme catalyses L-seryl-[protein] + ATP = O-phospho-L-seryl-[protein] + ADP + H(+). It carries out the reaction L-threonyl-[protein] + ATP = O-phospho-L-threonyl-[protein] + ADP + H(+). It catalyses the reaction L-tyrosyl-[protein] + ATP = O-phospho-L-tyrosyl-[protein] + ADP + H(+). Functionally, the CERK1, MEKK1a/b, MKK1a/b/c and MPK4a/b proteins are involved in pathogen defense. The pathway induces rapid growth inhibition, cell wall depositions and accumulation of defense-related transcripts. This protein is required for full defense response to fungal pathogen chitin. The sequence is that of Mitogen-activated protein kinase kinase 1c from Physcomitrium patens (Spreading-leaved earth moss).